Here is a 631-residue protein sequence, read N- to C-terminus: Probable potassium transport system protein Kup (631 aa).

Helical transmembrane passes span 17–37 (IGLLIAAVGVVYGDIGTSPLY), 56–76 (ILGVLSLIFWSLIWVVSFKYM), 109–129 (MMMVVFGLFGAALFYGDSMIT), 147–167 (GLDHWIVPMALVVLVGLFLIQ), 174–194 (IGVLFGPVMVVWFLVLGALGV), 215–235 (FFIIHPGIGVAILGAVVLALT), 256–276 (WFILVLPALLLNYFGQGALVL), 288–308 (LLAPSWALLPLIGLSTMATII), 346–366 (IYIGAVNWALMVGVIMLVIGF), 378–398 (VAVTGTMLCTTILVSTVMLML), 403–423 (PLLAVPLLICLLLVDGLFFAA), and 428–448 (IFQGGAFPVLAGAVLFILMTT).

The protein belongs to the HAK/KUP transporter (TC 2.A.72) family.

It localises to the cell inner membrane. The enzyme catalyses K(+)(in) + H(+)(in) = K(+)(out) + H(+)(out). In terms of biological role, transport of potassium into the cell. Likely operates as a K(+):H(+) symporter. The sequence is that of Probable potassium transport system protein Kup from Pseudomonas syringae pv. tomato (strain ATCC BAA-871 / DC3000).